The chain runs to 594 residues: DEAD-box ATP-dependent RNA helicase 25 (594 aa).

Disordered regions lie at residues 56-80 and 92-121; these read RSGG…EEGL and GVRE…VDGS. Residues 126 to 154 carry the Q motif motif; the sequence is TRFDQCTISPLSLKAVKDAGYERMTQVQE. The Helicase ATP-binding domain maps to 157–340; that stretch reads LPVILQGKDV…HIAMKKNYKF (184 aa). An ATP-binding site is contributed by 170 to 177; that stretch reads AKTGTGKT. Residues 288–291 carry the DEAD box motif; sequence DEAD. Residues 370–520 form the Helicase C-terminal domain; sequence ILYDVLKKHV…SVDSSTQTIV (151 aa).

Belongs to the DEAD box helicase family.

The catalysed reaction is ATP + H2O = ADP + phosphate + H(+). The protein is DEAD-box ATP-dependent RNA helicase 25 of Oryza sativa subsp. japonica (Rice).